The sequence spans 356 residues: MRVLEEDLRNGYIRILVEDIDDLWILFMVLRKGDIVYARTSREVKPGEGGSSRRIPMVLGLRVEAIEFQEFTEKLRIRGIVVEGPEEFGVKGHYHTIAIGVGDQLAIVRETWSKHSLDILKKGVRRRRILLVSIDYDSACIAVLTEQGVKHHSEIQSDLPGKMYRVEHEEILDEYLSKVASALNNVIQQEEIDAVIIAGPGDLKNKLGENIRRDNRKHVYLDTTSTGGCQGISELLGRDVVKQVVGDLSIVKAKEVVEEFKRLIIKDPQLVAYGVDDVYGAVVYAAVSRIVVAGDLLHEPDDERRARVYEILEKAYETGAEVIIVPGKSDVGLEVQGFGGVIAVLRYRLFRGEHSP.

This sequence belongs to the eukaryotic release factor 1 family. Pelota subfamily. Monomer. A divalent metal cation is required as a cofactor.

It is found in the cytoplasm. Functionally, may function in recognizing stalled ribosomes, interact with stem-loop structures in stalled mRNA molecules, and effect endonucleolytic cleavage of the mRNA. May play a role in the release non-functional ribosomes and degradation of damaged mRNAs. Has endoribonuclease activity. In Desulfurococcus amylolyticus (strain DSM 18924 / JCM 16383 / VKM B-2413 / 1221n) (Desulfurococcus kamchatkensis), this protein is Protein pelota homolog.